We begin with the raw amino-acid sequence, 106 residues long: Large ribosomal subunit protein eL30 (106 aa).

It belongs to the eukaryotic ribosomal protein eL30 family.

In Sulfurisphaera tokodaii (strain DSM 16993 / JCM 10545 / NBRC 100140 / 7) (Sulfolobus tokodaii), this protein is Large ribosomal subunit protein eL30 (rpl30e).